The following is a 342-amino-acid chain: Dihydroorotase (342 aa).

The Zn(2+) site is built by H13 and H15. Residues 15–17 (HLR) and N41 each bind substrate. Residues K97, H134, and H172 each coordinate Zn(2+). At K97 the chain carries N6-carboxylysine. H134 provides a ligand contact to substrate. L217 serves as a coordination point for substrate. Residue D245 participates in Zn(2+) binding. D245 is an active-site residue. Substrate contacts are provided by H249 and A261.

It belongs to the metallo-dependent hydrolases superfamily. DHOase family. Class II DHOase subfamily. As to quaternary structure, homodimer. Zn(2+) serves as cofactor.

It carries out the reaction (S)-dihydroorotate + H2O = N-carbamoyl-L-aspartate + H(+). Its pathway is pyrimidine metabolism; UMP biosynthesis via de novo pathway; (S)-dihydroorotate from bicarbonate: step 3/3. Its function is as follows. Catalyzes the reversible cyclization of carbamoyl aspartate to dihydroorotate. The chain is Dihydroorotase from Shewanella amazonensis (strain ATCC BAA-1098 / SB2B).